The sequence spans 447 residues: Tryptophan 5-hydroxylase 1 (447 aa).

The ACT domain occupies T22–Q97. Phosphoserine; by PKA is present on S61. The L-tryptophan site is built by Y238, R260, and T268. Fe cation contacts are provided by H275, H280, and E320. Residues S339 and I369 each coordinate L-tryptophan.

The protein belongs to the biopterin-dependent aromatic amino acid hydroxylase family. In terms of assembly, homotetramer. Interacts with DNAJC12. It depends on Fe(2+) as a cofactor. In terms of processing, ubiquitinated, leading to its degradation by the proteasome. Ubiquitinated is triggered by phosphorylation. Phosphorylated; triggering degradation by the proteasome.

The catalysed reaction is (6R)-L-erythro-5,6,7,8-tetrahydrobiopterin + L-tryptophan + O2 = 5-hydroxy-L-tryptophan + (4aS,6R)-4a-hydroxy-L-erythro-5,6,7,8-tetrahydrobiopterin. Its pathway is aromatic compound metabolism; serotonin biosynthesis; serotonin from L-tryptophan: step 1/2. Functionally, oxidizes L-tryptophan to 5-hydroxy-l-tryptophan in the rate-determining step of serotonin biosynthesis. This Mus musculus (Mouse) protein is Tryptophan 5-hydroxylase 1.